Reading from the N-terminus, the 179-residue chain is Large ribosomal subunit protein uL5 (179 aa).

The protein belongs to the universal ribosomal protein uL5 family. As to quaternary structure, part of the 50S ribosomal subunit; part of the 5S rRNA/L5/L18/L25 subcomplex. Contacts the 5S rRNA and the P site tRNA. Forms a bridge to the 30S subunit in the 70S ribosome.

Its function is as follows. This is one of the proteins that bind and probably mediate the attachment of the 5S RNA into the large ribosomal subunit, where it forms part of the central protuberance. In the 70S ribosome it contacts protein S13 of the 30S subunit (bridge B1b), connecting the 2 subunits; this bridge is implicated in subunit movement. Contacts the P site tRNA; the 5S rRNA and some of its associated proteins might help stabilize positioning of ribosome-bound tRNAs. This Vibrio vulnificus (strain CMCP6) protein is Large ribosomal subunit protein uL5.